Consider the following 213-residue polypeptide: MEIYMSVFNTFVEFVARIVAPMQRQFINFIRIAIFIVMAWIGGLKVCQYEADGIAHFVSNSPFFSYMYEKGPNLVPNDKGELVMEYTLHKNPEGKMVAKNIEWHKENGTYTASYIIGAIIVTVGILTLAGIWNATAGLAGGLLTFGMSIVTLSFLITTPEAWVPNLGGDLPTPAYGFPYLSGVGRLVIKDIIMMAGGLTAAAECANRILARKK.

Helical transmembrane passes span 26 to 46, 112 to 132, and 136 to 156; these read FINF…GLKV, ASYI…AGIW, and AGLA…SFLI.

The protein resides in the cell membrane. This is an uncharacterized protein from Haemophilus influenzae (strain ATCC 51907 / DSM 11121 / KW20 / Rd).